A 252-amino-acid polypeptide reads, in one-letter code: Hydroxyacylglutathione hydrolase (252 aa).

Residues His-54, His-56, Asp-58, His-59, His-113, Asp-132, and His-170 each contribute to the Zn(2+) site.

This sequence belongs to the metallo-beta-lactamase superfamily. Glyoxalase II family. Monomer. The cofactor is Zn(2+).

The catalysed reaction is an S-(2-hydroxyacyl)glutathione + H2O = a 2-hydroxy carboxylate + glutathione + H(+). The protein operates within secondary metabolite metabolism; methylglyoxal degradation; (R)-lactate from methylglyoxal: step 2/2. Thiolesterase that catalyzes the hydrolysis of S-D-lactoyl-glutathione to form glutathione and D-lactic acid. The protein is Hydroxyacylglutathione hydrolase of Synechococcus sp. (strain JA-2-3B'a(2-13)) (Cyanobacteria bacterium Yellowstone B-Prime).